The following is a 331-amino-acid chain: Dof zinc finger protein DOF1.1 (331 aa).

Residues 77-131 (LKCPRCDSSNTKFCYYNNYNLTQPRHFCKGCRRYWTQGGALRNVPVGGGCRRNNK) form a Dof-type zinc finger. Positions 79, 82, 104, and 107 each coordinate Zn(2+). Disordered stretches follow at residues 121–166 (PVGG…TNHQ) and 291–331 (EEQP…NDLL). A compositionally biased stretch (low complexity) spans 135-160 (NGNLKSSSSSSKQSSSVNAQSPSSGQ). Positions 305 to 316 (GLTSPGNQTNQY) are enriched in polar residues.

As to quaternary structure, interacts with OBF4. Expressed in the vasculature (mainly in the phloem and associated cell files) of cotyledons, leaves, roots, flower stalks and petals. The PEAR proteins (e.g. DOF2.4, DOF5.1, DOF3.2, DOF1.1, DOF5.6 and DOF5.3) form a short-range concentration gradient that peaks at protophloem sieve elements (PSE).

The protein resides in the nucleus. Functionally, transcription factor that binds specifically to a 5'-AA[AG]G-3' consensus core sequence. Enhances the DNA binding of OBF transcription factors to OCS elements. Involved in the regulation of root development. The PEAR proteins (e.g. DOF2.4, DOF5.1, DOF3.2, DOF1.1, DOF5.6 and DOF5.3) activate gene expression that promotes radial growth of protophloem sieve elements. Element of a regulatory network controlling indole glucosinolates (IGS) biosynthesis, probably by inducing the expression of accurate genes (e.g. CYP83B1). Promotes apical dominance. The sequence is that of Dof zinc finger protein DOF1.1 from Arabidopsis thaliana (Mouse-ear cress).